A 132-amino-acid polypeptide reads, in one-letter code: NADPH-dependent 7-cyano-7-deazaguanine reductase (132 aa).

Residue cysteine 34 is the Thioimide intermediate of the active site. The active-site Proton donor is aspartate 41. Residues 56 to 58 (IEL) and 75 to 76 (HE) contribute to the substrate site.

This sequence belongs to the GTP cyclohydrolase I family. QueF type 1 subfamily.

The protein resides in the cytoplasm. It carries out the reaction 7-aminomethyl-7-carbaguanine + 2 NADP(+) = 7-cyano-7-deazaguanine + 2 NADPH + 3 H(+). It functions in the pathway tRNA modification; tRNA-queuosine biosynthesis. Catalyzes the NADPH-dependent reduction of 7-cyano-7-deazaguanine (preQ0) to 7-aminomethyl-7-deazaguanine (preQ1). This chain is NADPH-dependent 7-cyano-7-deazaguanine reductase, found in Vesicomyosocius okutanii subsp. Calyptogena okutanii (strain HA).